Reading from the N-terminus, the 143-residue chain is Ribosome maturation factor RimP (143 aa).

Belongs to the RimP family.

Its subcellular location is the cytoplasm. Functionally, required for maturation of 30S ribosomal subunits. This chain is Ribosome maturation factor RimP, found in Borrelia hermsii (strain HS1 / DAH).